The primary structure comprises 117 residues: Non-specific lipid-transfer protein 1 (117 aa).

The first 26 residues, 1–26 (MAYSAMTKLALVVALCMVVSVPIAQA), serve as a signal peptide directing secretion. Intrachain disulfides connect cysteine 29-cysteine 76, cysteine 39-cysteine 53, cysteine 54-cysteine 99, and cysteine 74-cysteine 113.

The protein belongs to the plant LTP family.

Functionally, plant non-specific lipid-transfer proteins transfer phospholipids as well as galactolipids across membranes. May play a role in wax or cutin deposition in the cell walls of expanding epidermal cells and certain secretory tissues. This chain is Non-specific lipid-transfer protein 1, found in Prunus dulcis (Almond).